The chain runs to 489 residues: Protein TOS4 (489 aa).

Composition is skewed to polar residues over residues 1–10 (MSSQFPSSPY) and 20–32 (NYKQ…SSNY). The interval 1-101 (MSSQFPSSPY…FSSKLSSPSR (101 aa)) is disordered. Residue Ser40 is modified to Phosphoserine. The segment covering 56-68 (PSSSIGRVSSPVR) has biased composition (polar residues). Residues 89–100 (SPKFSSKLSSPS) show a composition bias toward low complexity. Position 100 is a phosphoserine (Ser100). Residues 118 to 170 (ITVGRNSSQCDVALCKNKFISRVHASITYLPQTNEVKIHCFSMNGLIVTYRKQ) enclose the FHA domain. Residues 316-366 (SSPLSSVSSVDHEEQTLRQDSLSSDKNPMTMKKPKLNKRVLPSKPKKSVKE) are disordered. Polar residues predominate over residues 333-342 (RQDSLSSDKN).

The protein belongs to the PLM2/TOS4 family. Phosphorylated by CDC28.

The protein localises to the nucleus. In terms of biological role, binds to the promoters of genes with functions important for the G1/S (start) transition; primarily genes involved in pheromone response, polarized growth and transcription. The sequence is that of Protein TOS4 (TOS4) from Saccharomyces cerevisiae (strain ATCC 204508 / S288c) (Baker's yeast).